The following is a 622-amino-acid chain: Kelch-like protein 14 (622 aa).

Residues 33 to 145 (CDVTLTAQGQ…LYTANVTLSL (113 aa)) enclose the BTB domain. Residues 73 to 108 (ALGPGAQDGLGGAPPKEPPPPPQEEPGTPSSSPEDK) form a disordered region. Pro residues predominate over residues 87–96 (PKEPPPPPQE). Kelch repeat units follow at residues 317-366 (MLLL…EVEN), 367-418 (FLFV…RLDK), 419-465 (NLYV…VHNG), 467-512 (IYIS…VMND), 514-564 (LYAI…VLDD), and 566-614 (IYLV…TVIL).

It localises to the cytoplasm. It is found in the cytosol. The protein localises to the endoplasmic reticulum membrane. The protein is Kelch-like protein 14 (KLHL14) of Gallus gallus (Chicken).